A 378-amino-acid polypeptide reads, in one-letter code: Erythronate-4-phosphate dehydrogenase (378 aa).

The substrate site is built by serine 45 and threonine 66. Aspartate 146 contacts NAD(+). Arginine 207 is an active-site residue. An NAD(+)-binding site is contributed by aspartate 231. Glutamate 236 is a catalytic residue. The active-site Proton donor is the histidine 253. Glycine 256 contacts NAD(+).

Belongs to the D-isomer specific 2-hydroxyacid dehydrogenase family. PdxB subfamily. Homodimer.

The protein resides in the cytoplasm. It catalyses the reaction 4-phospho-D-erythronate + NAD(+) = (R)-3-hydroxy-2-oxo-4-phosphooxybutanoate + NADH + H(+). The protein operates within cofactor biosynthesis; pyridoxine 5'-phosphate biosynthesis; pyridoxine 5'-phosphate from D-erythrose 4-phosphate: step 2/5. In terms of biological role, catalyzes the oxidation of erythronate-4-phosphate to 3-hydroxy-2-oxo-4-phosphonooxybutanoate. The chain is Erythronate-4-phosphate dehydrogenase from Wigglesworthia glossinidia brevipalpis.